Here is a 164-residue protein sequence, read N- to C-terminus: C-phycoerythrin class 1 subunit alpha (164 aa).

Cys-82 and Cys-139 together coordinate (2R,3E)-phycoerythrobilin.

Belongs to the phycobiliprotein family. In terms of assembly, heterodimer of an alpha and a beta chain. In terms of processing, contains one covalently linked bilin chromophore.

The protein resides in the cellular thylakoid membrane. Its function is as follows. Light-harvesting photosynthetic bile pigment-protein from the phycobiliprotein complex. The chain is C-phycoerythrin class 1 subunit alpha (cpeA) from Synechococcus sp. (strain WH7803).